Here is a 386-residue protein sequence, read N- to C-terminus: WD repeat-containing protein 89 (386 aa).

WD repeat units lie at residues 21-65 (KEPT…LLRE), 68-107 (GSPG…EKPV), 112-156 (GYPS…QDLS), 167-207 (THSD…EEDA), 213-253 (NSVS…TDEP), and 318-357 (GHAA…KTFT).

The chain is WD repeat-containing protein 89 (Wdr89) from Mus musculus (Mouse).